A 386-amino-acid polypeptide reads, in one-letter code: Succinate--CoA ligase [ADP-forming] subunit beta (386 aa).

One can recognise an ATP-grasp domain in the interval 9 to 244 (KEILRKYGVP…HDEEDPLETR (236 aa)). Residues Lys46, 53-55 (GRG), Glu99, Cys102, and Glu107 each bind ATP. Mg(2+) is bound by residues Asn199 and Asp213. Residues Asn264 and 321–323 (GIM) contribute to the substrate site.

The protein belongs to the succinate/malate CoA ligase beta subunit family. As to quaternary structure, heterotetramer of two alpha and two beta subunits. Mg(2+) is required as a cofactor.

The enzyme catalyses succinate + ATP + CoA = succinyl-CoA + ADP + phosphate. It catalyses the reaction GTP + succinate + CoA = succinyl-CoA + GDP + phosphate. Its pathway is carbohydrate metabolism; tricarboxylic acid cycle; succinate from succinyl-CoA (ligase route): step 1/1. In terms of biological role, succinyl-CoA synthetase functions in the citric acid cycle (TCA), coupling the hydrolysis of succinyl-CoA to the synthesis of either ATP or GTP and thus represents the only step of substrate-level phosphorylation in the TCA. The beta subunit provides nucleotide specificity of the enzyme and binds the substrate succinate, while the binding sites for coenzyme A and phosphate are found in the alpha subunit. The chain is Succinate--CoA ligase [ADP-forming] subunit beta from Rickettsia peacockii (strain Rustic).